A 431-amino-acid chain; its full sequence is Reticulon-like protein B17 (431 aa).

2 disordered regions span residues 1 to 110 (MEST…SEAV) and 126 to 152 (PPRK…SSSD). A compositionally biased stretch (polar residues) spans 12–26 (TKSASRLQDSSNPPN). Positions 126-138 (PPRKRKTNGRPKK) are enriched in basic residues. Positions 142–152 (SSAPPLCSSSD) are enriched in polar residues. Positions 168–355 (ISDLVMWRDV…VTAFWNLTSI (188 aa)) constitute a Reticulon domain. Helical transmembrane passes span 177-197 (VAKS…SCFA), 202-222 (FSVF…SFLS), 286-306 (YGHL…SFTI), and 349-369 (FWNL…LVIF). Positions 382–415 (EVEPVENEQEEETLPQEEETVPQEEETVPQEEEQ) are enriched in acidic residues. Residues 382–422 (EVEPVENEQEEETLPQEEETVPQEEETVPQEEEQTQPSEER) are disordered.

The protein resides in the endoplasmic reticulum membrane. In Arabidopsis thaliana (Mouse-ear cress), this protein is Reticulon-like protein B17 (RTNLB17).